The primary structure comprises 444 residues: Phosphoglucosamine mutase (444 aa).

Residue Ser102 is the Phosphoserine intermediate of the active site. Positions 102, 241, 243, and 245 each coordinate Mg(2+). The residue at position 102 (Ser102) is a Phosphoserine.

It belongs to the phosphohexose mutase family. Requires Mg(2+) as cofactor. Activated by phosphorylation.

It catalyses the reaction alpha-D-glucosamine 1-phosphate = D-glucosamine 6-phosphate. In terms of biological role, catalyzes the conversion of glucosamine-6-phosphate to glucosamine-1-phosphate. The sequence is that of Phosphoglucosamine mutase from Acidovorax ebreus (strain TPSY) (Diaphorobacter sp. (strain TPSY)).